A 118-amino-acid chain; its full sequence is Ribonuclease P protein component (118 aa).

It belongs to the RnpA family. Consists of a catalytic RNA component (M1 or rnpB) and a protein subunit.

The catalysed reaction is Endonucleolytic cleavage of RNA, removing 5'-extranucleotides from tRNA precursor.. Functionally, RNaseP catalyzes the removal of the 5'-leader sequence from pre-tRNA to produce the mature 5'-terminus. It can also cleave other RNA substrates such as 4.5S RNA. The protein component plays an auxiliary but essential role in vivo by binding to the 5'-leader sequence and broadening the substrate specificity of the ribozyme. This chain is Ribonuclease P protein component, found in Bifidobacterium animalis subsp. lactis (strain AD011).